The following is a 319-amino-acid chain: 2,3,4,5-tetrahydropyridine-2,6-dicarboxylate N-succinyltransferase (319 aa).

Positions 167 and 184 each coordinate Mg(2+). Catalysis depends on Glu-200, which acts as the Acyl-anhydride intermediate. Succinyl-CoA-binding positions include Arg-202, Gly-217, Ser-220, Ala-243, 258–259 (EA), and Lys-278.

This sequence belongs to the type 2 tetrahydrodipicolinate N-succinyltransferase family. As to quaternary structure, homotrimer.

The protein localises to the cytoplasm. The enzyme catalyses (S)-2,3,4,5-tetrahydrodipicolinate + succinyl-CoA + H2O = (S)-2-succinylamino-6-oxoheptanedioate + CoA. The protein operates within amino-acid biosynthesis; L-lysine biosynthesis via DAP pathway; LL-2,6-diaminopimelate from (S)-tetrahydrodipicolinate (succinylase route): step 1/3. In terms of biological role, catalyzes the conversion of the cyclic tetrahydrodipicolinate (THDP) into the acyclic N-succinyl-L-2-amino-6-oxopimelate using succinyl-CoA. The chain is 2,3,4,5-tetrahydropyridine-2,6-dicarboxylate N-succinyltransferase from Salinispora tropica (strain ATCC BAA-916 / DSM 44818 / JCM 13857 / NBRC 105044 / CNB-440).